A 265-amino-acid chain; its full sequence is Tyrosine protein kinase-interacting protein (265 aa).

Residues 1 to 14 (MANEGEEIELTEFP) show a composition bias toward acidic residues. The segment at 1-49 (MANEGEEIELTEFPETEKERKDEEKLSSCSEETTDTSSSSSSDHVPAPI) is disordered. Residues 1–238 (MANEGEEIEL…LKRLENKVNA (238 aa)) lie on the Cytoplasmic side of the membrane. The span at 15–26 (ETEKERKDEEKL) shows a compositional bias: basic and acidic residues. The segment covering 27–43 (SSCSEETTDTSSSSSSD) has biased composition (low complexity). Tyrosine 123 is modified (phosphotyrosine; by host LCK). The residue at position 136 (tyrosine 136) is a Phosphotyrosine; by host. Residues 155–164 (EDLQSFLEKY) form a CSKH/LBD2 region. The interval 172-192 (KRDLSATWDPGMPTPALPPRP) is disordered. Residues 183-192 (MPTPALPPRP) form an SH3B/LBD1 region. Positions 183–192 (MPTPALPPRP) are enriched in pro residues. Residues 225-234 (IVKDLKRLEN) form an SH3 binding region. A helical membrane pass occupies residues 239–259 (IICLVVVILAVLLLVTVLSIL). The Extracellular segment spans residues 260–265 (HIGMKS).

Binds host LCK, human WDR48 and human NXF1/TAP. Forms a complex with activated LCK and STAT1 and STAT3. Post-translationally, phosphorylation on Tyr-123 acts as a docking site for the recruitment of STATs 1 and 3.

Its subcellular location is the host cell membrane. In terms of biological role, plays a critical role in virus induced T-cell transformation. Binds to T-cell-specific tyrosine kinase LCK SH2 and SH3 domains, thereby activating its kinase activity. Once phosphorylated by host LCK, forms a complex with at least STAT 1 and 3, resulting on the phosphorylation of STAT3 and presumably STAT1, and their migration into the nucleus to induce transcription of target genes. Stimulates host ILF3/NF-AT-90 activity. Association with host NXF1/TAP transduces the signal up-regulating surface expression of adhesion molecules as well as activating NF-kappa-B activity. Acts synergistically with StpC to stimulate NF-kappa-B activity and interleukin-2 gene expression. Activation of NF-kappa-B protects lymphocytes from apoptosis, thereby facilitating viral induced cell transformation. May cause down-regulation of host LCK and cell apoptosis when stably overexpressed ex vivo. Interaction with WDR48 induce degradation of T-cell receptor in a lysosome-dependent fashion, when both proteins are overexpressed. The biological effect of this interaction remains controversial since no T-cell receptor degradation is observed in infected cells. The protein is Tyrosine protein kinase-interacting protein of Saimiriine herpesvirus 2 (strain 484) (SaHV-2).